The following is a 37-amino-acid chain: Large ribosomal subunit protein bL36c (37 aa).

Belongs to the bacterial ribosomal protein bL36 family.

It localises to the plastid. It is found in the chloroplast. In Liriodendron tulipifera (Tuliptree), this protein is Large ribosomal subunit protein bL36c.